The primary structure comprises 416 residues: Gamma-glutamyl phosphate reductase (416 aa).

Belongs to the gamma-glutamyl phosphate reductase family.

Its subcellular location is the cytoplasm. It catalyses the reaction L-glutamate 5-semialdehyde + phosphate + NADP(+) = L-glutamyl 5-phosphate + NADPH + H(+). It participates in amino-acid biosynthesis; L-proline biosynthesis; L-glutamate 5-semialdehyde from L-glutamate: step 2/2. Catalyzes the NADPH-dependent reduction of L-glutamate 5-phosphate into L-glutamate 5-semialdehyde and phosphate. The product spontaneously undergoes cyclization to form 1-pyrroline-5-carboxylate. The protein is Gamma-glutamyl phosphate reductase of Salmonella paratyphi C (strain RKS4594).